A 356-amino-acid polypeptide reads, in one-letter code: UDP-N-acetylglucosamine--N-acetylmuramyl-(pentapeptide) pyrophosphoryl-undecaprenol N-acetylglucosamine transferase (356 aa).

Residues 15-17 (TGG), Asn-127, Arg-163, Ser-191, Ile-244, 263-268 (ALTVSE), and Gln-288 each bind UDP-N-acetyl-alpha-D-glucosamine.

This sequence belongs to the glycosyltransferase 28 family. MurG subfamily.

It is found in the cell inner membrane. It carries out the reaction di-trans,octa-cis-undecaprenyl diphospho-N-acetyl-alpha-D-muramoyl-L-alanyl-D-glutamyl-meso-2,6-diaminopimeloyl-D-alanyl-D-alanine + UDP-N-acetyl-alpha-D-glucosamine = di-trans,octa-cis-undecaprenyl diphospho-[N-acetyl-alpha-D-glucosaminyl-(1-&gt;4)]-N-acetyl-alpha-D-muramoyl-L-alanyl-D-glutamyl-meso-2,6-diaminopimeloyl-D-alanyl-D-alanine + UDP + H(+). Its pathway is cell wall biogenesis; peptidoglycan biosynthesis. Cell wall formation. Catalyzes the transfer of a GlcNAc subunit on undecaprenyl-pyrophosphoryl-MurNAc-pentapeptide (lipid intermediate I) to form undecaprenyl-pyrophosphoryl-MurNAc-(pentapeptide)GlcNAc (lipid intermediate II). This is UDP-N-acetylglucosamine--N-acetylmuramyl-(pentapeptide) pyrophosphoryl-undecaprenol N-acetylglucosamine transferase from Klebsiella pneumoniae subsp. pneumoniae (strain ATCC 700721 / MGH 78578).